The sequence spans 357 residues: Phosphoribosylformylglycinamidine cyclo-ligase (357 aa).

This sequence belongs to the AIR synthase family.

It is found in the cytoplasm. The enzyme catalyses 2-formamido-N(1)-(5-O-phospho-beta-D-ribosyl)acetamidine + ATP = 5-amino-1-(5-phospho-beta-D-ribosyl)imidazole + ADP + phosphate + H(+). The protein operates within purine metabolism; IMP biosynthesis via de novo pathway; 5-amino-1-(5-phospho-D-ribosyl)imidazole from N(2)-formyl-N(1)-(5-phospho-D-ribosyl)glycinamide: step 2/2. The protein is Phosphoribosylformylglycinamidine cyclo-ligase of Rhizobium rhizogenes (strain K84 / ATCC BAA-868) (Agrobacterium radiobacter).